A 220-amino-acid polypeptide reads, in one-letter code: Thiamine-phosphate synthase (220 aa).

4-amino-2-methyl-5-(diphosphooxymethyl)pyrimidine-binding positions include 46–50 (QFREK) and asparagine 83. Mg(2+) contacts are provided by aspartate 84 and aspartate 103. Serine 122 contributes to the 4-amino-2-methyl-5-(diphosphooxymethyl)pyrimidine binding site. 149–151 (TNS) is a binding site for 2-[(2R,5Z)-2-carboxy-4-methylthiazol-5(2H)-ylidene]ethyl phosphate. Lysine 152 is a binding site for 4-amino-2-methyl-5-(diphosphooxymethyl)pyrimidine. Residues glycine 181 and 201–202 (IS) each bind 2-[(2R,5Z)-2-carboxy-4-methylthiazol-5(2H)-ylidene]ethyl phosphate.

It belongs to the thiamine-phosphate synthase family. Mg(2+) serves as cofactor.

It carries out the reaction 2-[(2R,5Z)-2-carboxy-4-methylthiazol-5(2H)-ylidene]ethyl phosphate + 4-amino-2-methyl-5-(diphosphooxymethyl)pyrimidine + 2 H(+) = thiamine phosphate + CO2 + diphosphate. It catalyses the reaction 2-(2-carboxy-4-methylthiazol-5-yl)ethyl phosphate + 4-amino-2-methyl-5-(diphosphooxymethyl)pyrimidine + 2 H(+) = thiamine phosphate + CO2 + diphosphate. The catalysed reaction is 4-methyl-5-(2-phosphooxyethyl)-thiazole + 4-amino-2-methyl-5-(diphosphooxymethyl)pyrimidine + H(+) = thiamine phosphate + diphosphate. The protein operates within cofactor biosynthesis; thiamine diphosphate biosynthesis; thiamine phosphate from 4-amino-2-methyl-5-diphosphomethylpyrimidine and 4-methyl-5-(2-phosphoethyl)-thiazole: step 1/1. In terms of biological role, condenses 4-methyl-5-(beta-hydroxyethyl)thiazole monophosphate (THZ-P) and 2-methyl-4-amino-5-hydroxymethyl pyrimidine pyrophosphate (HMP-PP) to form thiamine monophosphate (TMP). The protein is Thiamine-phosphate synthase of Mannheimia succiniciproducens (strain KCTC 0769BP / MBEL55E).